The sequence spans 151 residues: Small ribosomal subunit protein bS6 (151 aa).

The segment at 96 to 151 is disordered; that stretch reads HEEGQSAMLTRRDDRRERDGDDRPRRREGGFDRGDRGDRGDRGPRRPRDNEAGEGA.

Belongs to the bacterial ribosomal protein bS6 family.

Its function is as follows. Binds together with bS18 to 16S ribosomal RNA. The chain is Small ribosomal subunit protein bS6 from Brucella anthropi (strain ATCC 49188 / DSM 6882 / CCUG 24695 / JCM 21032 / LMG 3331 / NBRC 15819 / NCTC 12168 / Alc 37) (Ochrobactrum anthropi).